A 260-amino-acid polypeptide reads, in one-letter code: Phosphatidylglycerol--prolipoprotein diacylglyceryl transferase (260 aa).

Transmembrane regions (helical) follow at residues 17–37 (VVKW…SWIF), 52–72 (LTAA…LHVI), 85–105 (IFSG…IGLW), and 113–133 (FNLG…QAIG). A 1,2-diacyl-sn-glycero-3-phospho-(1'-sn-glycerol) is bound at residue Arg134. The next 3 helical transmembrane spans lie at 170 to 190 (APTQ…SLFI), 198 to 218 (GQLF…IGFV), and 227 to 247 (GLEQ…PLFI).

The protein belongs to the Lgt family.

It is found in the cell membrane. The catalysed reaction is L-cysteinyl-[prolipoprotein] + a 1,2-diacyl-sn-glycero-3-phospho-(1'-sn-glycerol) = an S-1,2-diacyl-sn-glyceryl-L-cysteinyl-[prolipoprotein] + sn-glycerol 1-phosphate + H(+). The protein operates within protein modification; lipoprotein biosynthesis (diacylglyceryl transfer). Its function is as follows. Catalyzes the transfer of the diacylglyceryl group from phosphatidylglycerol to the sulfhydryl group of the N-terminal cysteine of a prolipoprotein, the first step in the formation of mature lipoproteins. This chain is Phosphatidylglycerol--prolipoprotein diacylglyceryl transferase, found in Dehalococcoides mccartyi (strain ATCC BAA-2100 / JCM 16839 / KCTC 5957 / BAV1).